Reading from the N-terminus, the 367-residue chain is Protein RecA (367 aa).

73-80 (GPESSGKT) lines the ATP pocket. Positions 345–367 (DEPVAKKASAKESKEAKELKEVE) are disordered.

Belongs to the RecA family.

It localises to the cytoplasm. Functionally, can catalyze the hydrolysis of ATP in the presence of single-stranded DNA, the ATP-dependent uptake of single-stranded DNA by duplex DNA, and the ATP-dependent hybridization of homologous single-stranded DNAs. It interacts with LexA causing its activation and leading to its autocatalytic cleavage. This is Protein RecA from Janthinobacterium sp. (strain Marseille) (Minibacterium massiliensis).